Reading from the N-terminus, the 48-residue chain is Small, acid-soluble spore protein P (48 aa).

Residues 1–12 (MTNKNDGKDMRK) show a composition bias toward basic and acidic residues. The segment at 1-48 (MTNKNDGKDMRKNAPKGDNPGQPEPLDGSKKVKNRNHTRQKHNTSHDM) is disordered. The span at 31–48 (KVKNRNHTRQKHNTSHDM) shows a compositional bias: basic residues.

This sequence belongs to the SspP family.

It is found in the spore core. The chain is Small, acid-soluble spore protein P from Geobacillus kaustophilus (strain HTA426).